We begin with the raw amino-acid sequence, 1134 residues long: Myosin-4 (1134 aa).

In terms of domain architecture, Myosin N-terminal SH3-like spans 110 to 160 (REKLCVWCRVAANGQWHLGKIHSTSSSDDVCVMLSANDDVRTMEEIFPANP). One can recognise a Myosin motor domain in the interval 164-830 (EGVEDLTQLS…VISVLEERKK (667 aa)). Residues 255–262 (GESGAGKT) and 304–312 (NDNSSRFGK) each bind ATP. 2 actin-binding regions span residues 589-623 (LIEK…KQHL) and 710-732 (LFKL…KPNS). IQ domains lie at 832 to 861 (VLRG…AAVI), 855 to 884 (MRNA…SAIV), and 891 to 920 (ELDA…KNKP). The disordered stretch occupies residues 913–939 (STQQKNKPRNEKKKTRRKSTKRVSEDK). The span at 918 to 933 (NKPRNEKKKTRRKSTK) shows a compositional bias: basic residues. A coiled-coil region spans residues 953-999 (LADLQSRVLKVEAAIMQKEDENTALQEELQRFEERWLENETRMKSME).

This sequence belongs to the TRAFAC class myosin-kinesin ATPase superfamily. Myosin family. Plant myosin class VIII subfamily. Homodimer.

Functionally, myosin heavy chain that is required for the cell cycle-regulated transport of various organelles and proteins for their segregation. Functions by binding with its tail domain to receptor proteins on organelles and exerting force with its N-terminal motor domain against actin filaments, thereby transporting its cargo along polarized actin cables. The polypeptide is Myosin-4 (VIII-B) (Arabidopsis thaliana (Mouse-ear cress)).